The following is a 199-amino-acid chain: Recombination protein RecR (199 aa).

The segment at 58–73 adopts a C4-type zinc-finger fold; sequence CRTCFSLSDQPECRIC. In terms of domain architecture, Toprim spans 81-176; it reads SIICVVEKPT…NVTRIASGVP (96 aa).

The protein belongs to the RecR family.

Its function is as follows. May play a role in DNA repair. It seems to be involved in an RecBC-independent recombinational process of DNA repair. It may act with RecF and RecO. The sequence is that of Recombination protein RecR from Desulforapulum autotrophicum (strain ATCC 43914 / DSM 3382 / VKM B-1955 / HRM2) (Desulfobacterium autotrophicum).